The primary structure comprises 428 residues: 2,3-bisphosphoglycerate-independent phosphoglycerate mutase 2 (428 aa).

The protein belongs to the BPG-independent phosphoglycerate mutase family. A-PGAM subfamily.

It catalyses the reaction (2R)-2-phosphoglycerate = (2R)-3-phosphoglycerate. The protein operates within carbohydrate degradation; glycolysis; pyruvate from D-glyceraldehyde 3-phosphate: step 3/5. In terms of biological role, catalyzes the interconversion of 2-phosphoglycerate and 3-phosphoglycerate. The protein is 2,3-bisphosphoglycerate-independent phosphoglycerate mutase 2 (apgM2) of Methanocaldococcus jannaschii (strain ATCC 43067 / DSM 2661 / JAL-1 / JCM 10045 / NBRC 100440) (Methanococcus jannaschii).